A 912-amino-acid polypeptide reads, in one-letter code: Alpha-actinin-4 (912 aa).

Residues 1 to 267 (MVDYHAANQA…IMTYVSSFYH (267 aa)) form an actin-binding region. An interaction with VCL region spans residues 12-27 (QYGPNSGGGNGAGGGG). The tract at residues 12–31 (QYGPNSGGGNGAGGGGSMGD) is disordered. Gly residues predominate over residues 16 to 29 (NSGGGNGAGGGGSM). A Phosphotyrosine modification is found at tyrosine 32. The segment at 41-62 (RDLLLDPAWEKQQRKTFTAWCN) is interaction with VCL. 2 Calponin-homology (CH) domains span residues 51-155 (KQQR…LRFA) and 164-270 (TSAK…HAFS). An LXXLL motif motif is present at residues 85–89 (LMLLL). Positions 109–127 (KINNVNKALDFIASKGVKL) are interaction with VCL. At lysine 115 the chain carries N6-acetyllysine. The interval 178 to 193 (TAPYKNVNVQNFHISW) is polyphosphoinositide (PIP2)-binding. An N6-acetyllysine modification is found at lysine 215. A Phosphothreonine modification is found at threonine 250. 4 Spectrin repeats span residues 294–404 (HLME…WLLN), 414–519 (HLAE…ALEK), 529–640 (QLHL…ALLE), and 650–753 (HLRR…EVEN). An N6-acetyllysine mark is found at lysine 593 and lysine 626. Serine 697 is subject to Phosphoserine. Residues 737-912 (WEQLLTTIAR…STALYGESDL (176 aa)) are mediates interaction with MICALL2. EF-hand domains lie at 766–801 (EQMQ…LGYD) and 807–842 (QGDA…ETTD). Aspartate 779 contributes to the Ca(2+) binding site. Position 780 is an N6-acetyllysine (lysine 780). Ca(2+) is bound by residues aspartate 781 and glutamate 790. Lysine 860 carries the N6-acetyllysine modification. Serine 910 carries the phosphoserine modification.

Belongs to the alpha-actinin family. Homodimer; antiparallel. Interacts with MAGI1. Interacts with PDLIM2. Identified in a complex with CASK, IQGAP1, MAGI2, NPHS1, SPTAN1 and SPTBN1. Identified in a IGF2BP1-dependent mRNP granule complex containing untranslated mRNAs. Component of the CART complex, at least composed of ACTN4, HGS/HRS, MYO5B and TRIM3. Binds TRIM3 at the N-terminus. Interacts with MICALL2 (preferentially in opened conformation); stimulated by RAB13 activation. Interacts with PPARG and RARA. Binds to VCL; this interaction triggers VCL conformational changes. Interacts with SEPTIN14. Interacts with IGSF8.

The protein localises to the nucleus. Its subcellular location is the cytoplasm. It is found in the cell junction. It localises to the cytoskeleton. The protein resides in the stress fiber. The protein localises to the perinuclear region. Functionally, F-actin cross-linking protein which is thought to anchor actin to a variety of intracellular structures. This is a bundling protein. Probably involved in vesicular trafficking via its association with the CART complex. The CART complex is necessary for efficient transferrin receptor recycling but not for EGFR degradation. Involved in tight junction assembly in epithelial cells probably through interaction with MICALL2. Links MICALL2 to the actin cytoskeleton and recruits it to the tight junctions. May also function as a transcriptional coactivator, stimulating transcription mediated by the nuclear hormone receptors PPARG and RARA. Association with IGSF8 regulates the immune synapse formation and is required for efficient T-cell activation. The sequence is that of Alpha-actinin-4 from Mus musculus (Mouse).